The following is a 128-amino-acid chain: UPF0102 protein KPN78578_35270 (128 aa).

Residues 1 to 20 are disordered; sequence MAQVPAGKNRSGQLSKQTGD.

The protein belongs to the UPF0102 family.

In Klebsiella pneumoniae subsp. pneumoniae (strain ATCC 700721 / MGH 78578), this protein is UPF0102 protein KPN78578_35270.